The sequence spans 457 residues: NADH-quinone oxidoreductase subunit D (457 aa).

The tract at residues 1–23 is disordered; the sequence is MSTHTETPVDGSAETITGAQPYE.

It belongs to the complex I 49 kDa subunit family. As to quaternary structure, NDH-1 is composed of 14 different subunits. Subunits NuoB, C, D, E, F, and G constitute the peripheral sector of the complex.

Its subcellular location is the cell membrane. The enzyme catalyses a quinone + NADH + 5 H(+)(in) = a quinol + NAD(+) + 4 H(+)(out). Functionally, NDH-1 shuttles electrons from NADH, via FMN and iron-sulfur (Fe-S) centers, to quinones in the respiratory chain. The immediate electron acceptor for the enzyme in this species is believed to be a menaquinone. Couples the redox reaction to proton translocation (for every two electrons transferred, four hydrogen ions are translocated across the cytoplasmic membrane), and thus conserves the redox energy in a proton gradient. The protein is NADH-quinone oxidoreductase subunit D of Parafrankia sp. (strain EAN1pec).